The chain runs to 947 residues: Regulator of spindle assembly protein 2 (947 aa).

2 disordered regions span residues 20-148 (EKPA…LSEQ) and 173-211 (SPHE…LKPR). 2 stretches are compositionally biased toward basic and acidic residues: residues 30 to 50 (PKYR…EGEK) and 62 to 84 (TRED…DLRI). Polar residues-rich tracts occupy residues 90-102 (SATP…SDQY) and 179-188 (QQTIQESSEQ). A coiled-coil region spans residues 276 to 320 (IIAEEAKKRRNEAEAVRKLIEVETQNAKKRAVIQELKDRIDKLTQ). 4 disordered regions span residues 407-453 (KINP…RRIG), 575-594 (ERES…LEIP), 600-662 (SVTT…GLII), and 681-705 (EQSL…FLLD). The segment covering 411-422 (SSQLNQQSSSDA) has biased composition (low complexity). Residues 430 to 449 (EASTQMTSRLAESAMTQTSP) show a composition bias toward polar residues. The stretch at 563-591 (AGLSHYLEQVKKERESMEAQESESESMEL) forms a coiled coil. Residues 580–590 (EAQESESESME) show a composition bias toward acidic residues. Over residues 645–657 (FEHEIEEHKEPEK) the composition is skewed to basic and acidic residues.

In terms of assembly, interacts with phosphatase regulatory subunit rsa-1 and tpxl-1. May interact with spd-5. May interact with sys-1.

The protein resides in the cytoplasm. It localises to the cytoskeleton. It is found in the microtubule organizing center. Its subcellular location is the centrosome. Functionally, recruits rsa-1 and, thereby, phosphatase let-92/paa-1 complex to the centrosomes. Recruits sys-1/beta-catenin to mitotic centrosomes during the first embryonic cell divisions. The chain is Regulator of spindle assembly protein 2 from Caenorhabditis elegans.